The primary structure comprises 185 residues: Large ribosomal subunit protein uL22 (185 aa).

Residues 157 to 185 (VAAPTPDEDAPKKKQSKKKMARQKLMQRD) are disordered. A compositionally biased stretch (basic residues) spans 169–178 (KKQSKKKMAR).

It belongs to the universal ribosomal protein uL22 family.

The polypeptide is Large ribosomal subunit protein uL22 (RpL17) (Argas monolakensis (Mono lake bird tick)).